Reading from the N-terminus, the 75-residue chain is Exodeoxyribonuclease 7 small subunit (75 aa).

The protein belongs to the XseB family. In terms of assembly, heterooligomer composed of large and small subunits.

The protein resides in the cytoplasm. It catalyses the reaction Exonucleolytic cleavage in either 5'- to 3'- or 3'- to 5'-direction to yield nucleoside 5'-phosphates.. In terms of biological role, bidirectionally degrades single-stranded DNA into large acid-insoluble oligonucleotides, which are then degraded further into small acid-soluble oligonucleotides. The chain is Exodeoxyribonuclease 7 small subunit from Anaplasma phagocytophilum (strain HZ).